We begin with the raw amino-acid sequence, 405 residues long: Dematin (405 aa).

3 disordered regions span residues 1–29 (MERL…SPSS), 81–100 (SREC…PEVW), and 108–332 (IISQ…DRGN). A compositionally biased stretch (low complexity) spans 11 to 29 (SPGSVSSSRDSSVPGSPSS). 7 positions are modified to phosphoserine: S16, S18, S26, S92, S96, S110, and S113. Low complexity predominate over residues 113-124 (STPRTTGTPRTS). Phosphothreonine is present on T114. S156 and S226 each carry phosphoserine. Acidic residues predominate over residues 216–228 (EEEEEEEDDDSEE). Positions 224–308 (DDSEEEIKAI…SRLQSTEFSP (85 aa)) are interaction with RASGRF2. Basic and acidic residues-rich tracts occupy residues 229-242 (EIKA…EELS) and 252-261 (ILKEEMEKSL). Phosphoserine occurs at positions 269, 279, 289, 303, 315, 333, 372, and 383. Over residues 277–292 (HTSLHSGTSKSSSLPS) the composition is skewed to low complexity. A compositionally biased stretch (polar residues) spans 294–322 (GRTTLSRLQSTEFSPSGSEAGSPGLQNGE). The HP domain maps to 337–405 (VLEQKIYPYE…NELKKKASLF (69 aa)). A Phosphoserine; by PKA modification is found at S403.

The protein belongs to the villin/gelsolin family. As to quaternary structure, monomeric (isoform 2); under reducing conditions. Self-associates. Exists under oxidizing condition as a trimer of two isoforms 2 and isoform 1 linked by disulfide bonds. Found in a complex with DMTN, F-actin and spectrin. Found in a complex with ADD2, DMTN and SLC2A1. Interacts with F-actin, ITPKB and spectrin. Isoform 2 interacts with SLC2A1 (via C-terminus cytoplasmic region). Interacts with RASGRF2. Post-translationally, phosphorylated. Phosphorylation at Ser-403 by PKA causes the C-terminal headpiece domain to associate with the N-terminal core domain, and leads to the inhibition of its actin bundling activity. In terms of tissue distribution, expressed in platelets. Isoform 1 and isoform 2 are expressed in mature erythrocytes (at protein level).

It is found in the cytoplasm. The protein resides in the cytosol. Its subcellular location is the perinuclear region. The protein localises to the cytoskeleton. It localises to the cell membrane. It is found in the membrane. The protein resides in the endomembrane system. Its subcellular location is the cell projection. Functionally, membrane-cytoskeleton-associated protein with F-actin-binding activity that induces F-actin bundles formation and stabilization. Its F-actin-bundling activity is reversibly regulated upon its phosphorylation by the cAMP-dependent protein kinase A (PKA). Binds to the erythrocyte membrane glucose transporter-1 SLC2A1/GLUT1, and hence stabilizes and attaches the spectrin-actin network to the erythrocytic plasma membrane. Plays a role in maintaining the functional integrity of PKA-activated erythrocyte shape and the membrane mechanical properties. Also plays a role as a modulator of actin dynamics in fibroblasts; acts as a negative regulator of the RhoA activation pathway. In platelets, functions as a regulator of internal calcium mobilization across the dense tubular system that affects platelet granule secretion pathways and aggregation. Also required for the formation of a diverse set of cell protrusions, such as filopodia and lamellipodia, necessary for platelet cell spreading, motility and migration. Acts as a tumor suppressor and inhibits malignant cell transformation. This chain is Dematin (Dmtn), found in Mus musculus (Mouse).